Here is a 1036-residue protein sequence, read N- to C-terminus: UDP-N-acetylglucosamine--peptide N-acetylglucosaminyltransferase 110 kDa subunit (1036 aa).

Alanine 2 carries the N-acetylalanine modification. Phosphoserine; by GSK3-beta; alternate occurs at positions 3 and 4. Serine 3 and serine 4 each carry an O-linked (GlcNAc) serine; alternate glycan. TPR repeat units follow at residues 11-44 (STGLAELAHREYQAGDFEAAERHCMQLWRQEPDN), 79-112 (AEAYSNLGNVYKERGQLQEAIEHYRHALRLKPDF), 113-146 (IDGYINLAAALVAAGDMEGAVQAYVSALQYNPDL), 147-180 (YCVRSDLGNLLKALGRLEEAKACYLKAIETQPNF), 181-214 (AVAWSNLGCVFNAQGEIWLAIHHFEKAVTLDPNF), 215-248 (LDAYINLGNVLKEARIFDRAVAAYLRALSLSPNH), 249-282 (AVVHGNLACVYYEQGLIDLAIDTYRRAIELQPHF), 283-316 (PDAYCNLANALKEKGSVAEAEDCYNTALRLCPTH), 317-350 (ADSLNNLANIKREQGNIEEAVRLYRKALEVFPEF), 351-384 (AAAHSNLASVLQQQGKLQEALMHYKEAIRISPTF), 385-418 (ADAYSNMGNTLKEMQDVQGALQCYTRAIQINPAF), and 419-452 (ADAHSNLASIHKDSGNIPEAIASYRTALKLKPDF). Serine 389 carries O-linked (GlcNAc) serine; by autocatalysis glycosylation. Threonine 444 bears the Phosphothreonine mark. The stretch at 453–463 (PDAYCNLAHCL) is one TPR 13; truncated repeat. Residues 454–456 (DAY) carry the DFP motif motif. The Nuclear localization signal signature appears at 478 to 493 (KLVSIVAEQLEKNRLP). Histidine 498 functions as the Proton acceptor in the catalytic mechanism. Residues glutamine 839, lysine 842, 896 to 898 (APK), 901 to 904 (HVRR), 920 to 922 (HTT), and aspartate 925 each bind UDP. Tyrosine 979 is subject to Phosphotyrosine. The interval 981-1000 (KKIRGKVWKQRISSPLFNTK) is required for phosphatidylinositol 3,4,5-triphosphate binding.

The protein belongs to the glycosyltransferase 41 family. O-GlcNAc transferase subfamily. In terms of assembly, monomer; may exist in different oligomerization states in cells. Homotrimer, oligomerizes via TPR repeats 6 and 7. Trimerization is not necessary for activity in vitro, however it increases affinity for UDP-GlcNAc. A heterotrimer consisting of two 110 kDa subunits and one highly related 78 kDa subunit is isolated from liver. Component of a THAP1/THAP3-HCFC1-OGT complex. Component of the NSL complex at least composed of MOF/KAT8, KANSL1, KANSL2, KANSL3, MCRS1, PHF20, OGT1/OGT, WDR5 and HCFC1. Found in a complex with KIF5B, RHOT1, RHOT2 and TRAK1. Found in a complex composed of at least SINHCAF, SIN3A, HDAC1, SAP30, RBBP4, OGT and TET1. Component of a complex composed of KMT2E/MLL5, OGT and USP7; the complex stabilizes KMT2E/MLL5, preventing KMT2E/MLL5 ubiquitination and proteasomal-mediated degradation. Interacts (via TPRs 1-6) with SIN3A; the interaction mediates transcriptional repression in parallel with histone deacetylase. Interacts (via TPR 5-6) with TET1, TET2 and TET3. Interacts (via TPR repeats 6 and 7) with ATXN10. Interacts with NSD2. Interacts with PROSER1; this interaction mediates TET2 O-GlcNAcylation and stability by promoting the interaction between OGT and TET2. Post-translationally, several different immunologically-related forms of this protein are found in different tissues (with apparent molecular weights of 110, 80 and 78 kDa); they are probably the result of alternative splicing and/or proteolysis. O-glycosylated; contains O-GlcNAc. Both p110 and p78 forms are O-glycosylated. In terms of processing, ubiquitinated by the SCF(FBXO31) complex, leading to its proteasomal degradation. Post-translationally, phosphorylation on Ser-3 or Ser-4 by GSK3-beta positively regulates its activity. Phosphorylation at Thr-444 by AMPK promotes nuclear localization. Glycosylated via autocatalysis; O-GlcNAcylation at Ser-389 promotes nuclear localization. Expressed in brain, heart, liver, thymus, muscle, lung, spleen, uterus and ovary; in the kidney only an immunologically-related 78 kDa band is present, which is also present in liver and muscle. In the pancreas, expressed in both exocrine acinar cells and in endocrine cells of the islets of Langerhans.

It is found in the cytoplasm. Its subcellular location is the nucleus. It localises to the cell membrane. The protein resides in the mitochondrion membrane. The protein localises to the cell projection. The catalysed reaction is L-seryl-[protein] + UDP-N-acetyl-alpha-D-glucosamine = 3-O-(N-acetyl-beta-D-glucosaminyl)-L-seryl-[protein] + UDP + H(+). It catalyses the reaction L-threonyl-[protein] + UDP-N-acetyl-alpha-D-glucosamine = 3-O-(N-acetyl-beta-D-glucosaminyl)-L-threonyl-[protein] + UDP + H(+). It participates in protein modification; protein glycosylation. Its activity is regulated as follows. Inhibited by UDP, UTP and UDP-GlcNAc; 50 mM NaCl or KCl inhibit activity about 70%. Catalyzes the transfer of a single N-acetylglucosamine from UDP-GlcNAc to a serine or threonine residue in cytoplasmic and nuclear proteins resulting in their modification with a beta-linked N-acetylglucosamine (O-GlcNAc). Glycosylates a large and diverse number of proteins including histone H2B, AKT1, AMPK, ATG4B, CAPRIN1, EZH2, FNIP1, GSDMD, KRT7, LMNA, LMNB1, LMNB2, RPTOR, HOXA1, PFKL, KMT2E/MLL5, MAPT/TAU, TET2, RBL2, RET, NOD2 and HCFC1. Can regulate their cellular processes via cross-talk between glycosylation and phosphorylation or by affecting proteolytic processing. Involved in insulin resistance in muscle and adipocyte cells via glycosylating insulin signaling components and inhibiting the 'Thr-308' phosphorylation of AKT1, enhancing IRS1 phosphorylation and attenuating insulin signaling. Involved in glycolysis regulation by mediating glycosylation of 6-phosphofructokinase PFKL, inhibiting its activity. Plays a key role in chromatin structure by mediating O-GlcNAcylation of 'Ser-112' of histone H2B: recruited to CpG-rich transcription start sites of active genes via its interaction with TET proteins (TET1, TET2 or TET3). As part of the NSL complex indirectly involved in acetylation of nucleosomal histone H4 on several lysine residues. O-GlcNAcylation of 'Ser-75' of EZH2 increases its stability, and facilitating the formation of H3K27me3 by the PRC2/EED-EZH2 complex. Stabilizes KMT2E/MLL5 by mediating its glycosylation, thereby preventing KMT2E/MLL5 ubiquitination. Regulates circadian oscillation of the clock genes and glucose homeostasis in the liver. Stabilizes clock proteins BMAL1 and CLOCK through O-glycosylation, which prevents their ubiquitination and subsequent degradation. Promotes the CLOCK-BMAL1-mediated transcription of genes in the negative loop of the circadian clock such as PER1/2 and CRY1/2. O-glycosylates HCFC1 and regulates its proteolytic processing and transcriptional activity. Component of a THAP1/THAP3-HCFC1-OGT complex that is required for the regulation of the transcriptional activity of RRM1. Regulates mitochondrial motility in neurons by mediating glycosylation of TRAK1. Promotes autophagy by mediating O-glycosylation of ATG4B. Acts as a regulator of mTORC1 signaling by mediating O-glycosylation of RPTOR and FNIP1: O-GlcNAcylation of RPTOR in response to glucose sufficiency promotes activation of the mTORC1 complex. This is UDP-N-acetylglucosamine--peptide N-acetylglucosaminyltransferase 110 kDa subunit (Ogt) from Rattus norvegicus (Rat).